The following is a 519-amino-acid chain: Ribonuclease Y 1 (519 aa).

The chain crosses the membrane as a helical span at residues 2–22 (IILYIILAIIAIVVGYCAGFF). Positions 84-113 (QKQEDRLLQREDSLDRKDNSFEKRENSLER) are disordered. In terms of domain architecture, KH spans 209 to 294 (TITVVSLPND…EMVEKAKKEM (86 aa)). Positions 335 to 428 (VLNHSIEVAN…VAAANSISAA (94 aa)) constitute an HD domain.

Belongs to the RNase Y family.

It is found in the cell membrane. Its function is as follows. Endoribonuclease that initiates mRNA decay. The chain is Ribonuclease Y 1 from Pediococcus pentosaceus (strain ATCC 25745 / CCUG 21536 / LMG 10740 / 183-1w).